We begin with the raw amino-acid sequence, 285 residues long: MLPATFKLCAGISYRHMRNMTGLRKNAMIAIHHELNKLSGPGASTWINHIRRRSSLLSSPIAEETYSEADQCYVQQGQEALQKSISILEDQDGWQTEIESINGEKVMSKVLPGIGKVFKLEVTLEQQTGDLYDELVDNMEQMGEWNPNVKQVKILQKIGQETMITHEISAETPGNVVGPRDFVNVRHAKRRGSTCFLAGMSTQHPGMPEQKGFVRAENGPTCIVMRPSADDPNKTKFTWLLSLDLKGWIPKTVINRVLSQTQVDFVNHLRDRMASGGGIDAAIAC.

The transit peptide at methionine 1–isoleucine 61 directs the protein to the mitochondrion. The 214-residue stretch at threonine 65–glycine 278 folds into the START domain.

As to quaternary structure, may interact with TSPO. Highly expressed in the testis and at lower levels in the ovary, kidney and head.

The protein resides in the mitochondrion. It carries out the reaction cholesterol(in) = cholesterol(out). It participates in steroid metabolism; cholesterol metabolism. In terms of biological role, plays a key role in steroid hormone synthesis by enhancing the metabolism of cholesterol into pregnenolone. Mediates the transfer of cholesterol from the outer mitochondrial membrane to the inner mitochondrial membrane where it is cleaved to pregnenolone. This is Steroidogenic acute regulatory protein, mitochondrial (star) from Danio rerio (Zebrafish).